The chain runs to 823 residues: NAD-dependent histone deacetylase sirtuin-1 (823 aa).

Positions 41 to 67 (LASTSTEAEAEAEATATTTEPATSELA) are enriched in low complexity. The tract at residues 41 to 146 (LASTSTEAEA…SSSNCSSSVE (106 aa)) is disordered. Basic and acidic residues predominate over residues 72-95 (GEIKTKTLAAREEQEIGANLEHKT). Over residues 104-137 (EDEDDEEEEEEDDEEEEEDDEEGITGTSNEDEDS) the composition is skewed to acidic residues. Residues 204–499 (KLASVNTFDD…LCCDESVLTE (296 aa)) enclose the Deacetylase sirtuin-type domain. NAD(+) contacts are provided by residues 229–248 (GAGV…NGIY) and 313–316 (QNID). The Proton acceptor role is filled by histidine 331. Residues cysteine 339, cysteine 342, cysteine 363, and cysteine 366 each coordinate Zn(2+). Residues 427-429 (GSS), 452-454 (NRE), and serine 469 contribute to the NAD(+) site. Phosphoserine occurs at positions 618 and 621. The span at 698–707 (DYSDDDDEEE) shows a compositional bias: acidic residues. Disordered stretches follow at residues 698 to 722 (DYSD…GNVG) and 777 to 823 (IIEQ…LAAV). The span at 798–813 (PSEENKQQTQIERSEE) shows a compositional bias: basic and acidic residues. Residues 814 to 823 (SPPPGQLAAV) show a composition bias toward pro residues.

It belongs to the sirtuin family. Class I subfamily. As to quaternary structure, interacts with the transcriptional repressors hairy (hry) and deadpan (dpn); via basic domains. Associates with the Esc/E(z) histone methyltransferase complex. Interacts directly with E(z) and HDAC1/Rpd3. Zn(2+) is required as a cofactor.

It is found in the cytoplasm. Its subcellular location is the nucleus. The protein localises to the chromosome. It catalyses the reaction N(6)-acetyl-L-lysyl-[protein] + NAD(+) + H2O = 2''-O-acetyl-ADP-D-ribose + nicotinamide + L-lysyl-[protein]. NAD-dependent histone deacetylase involved in heterochromatic silencing. Mildly suppresses the heterochromatin-mediated silencing phenomenon known as position-effect variegation (PEV). Required for epigenetic silencing of the polycomb group proteins. Has histone H4 deacetylase activity in vitro. Required maternally for establishing proper segmentation of the embryo. Involved in sex determination. May be involved in the regulation of life span. This is NAD-dependent histone deacetylase sirtuin-1 from Drosophila melanogaster (Fruit fly).